Reading from the N-terminus, the 408-residue chain is Peptidase T (408 aa).

Position 79 (histidine 79) interacts with Zn(2+). Residue aspartate 81 is part of the active site. Aspartate 139 contacts Zn(2+). Residue glutamate 173 is the Proton acceptor of the active site. The Zn(2+) site is built by glutamate 174, aspartate 196, and histidine 378.

The protein belongs to the peptidase M20B family. It depends on Zn(2+) as a cofactor.

The protein localises to the cytoplasm. It carries out the reaction Release of the N-terminal residue from a tripeptide.. Functionally, cleaves the N-terminal amino acid of tripeptides. The chain is Peptidase T from Shouchella clausii (strain KSM-K16) (Alkalihalobacillus clausii).